The following is a 65-amino-acid chain: Ferredoxin-like protein in vnf region (65 aa).

4Fe-4S ferredoxin-type domains are found at residues 2–29 (AMAIDGYECTVCGDCKPVCPTGSIVLQG) and 30–65 (GIYVIDADSCNECADLGEPRCLGVCPVDFCIQPLDD). Cys-10, Cys-13, Cys-16, Cys-20, Cys-39, Cys-42, Cys-50, and Cys-54 together coordinate [4Fe-4S] cluster.

Requires [4Fe-4S] cluster as cofactor.

The chain is Ferredoxin-like protein in vnf region from Azotobacter chroococcum mcd 1.